The sequence spans 289 residues: Iodotyrosine deiodinase 1 (289 aa).

A helical transmembrane segment spans residues M1–K21. FMN contacts are provided by residues R100 to R104 and S128 to G129. 3,5-diiodo-L-tyrosine is bound by residues A130, E157, Y161, and K182. The 3-iodo-L-tyrosine site is built by A130, E157, Y161, and K182. FMN-binding positions include T237–T239 and R279.

It belongs to the nitroreductase family. In terms of assembly, homodimer. FMN serves as cofactor. As to expression, detected in thyroid (at protein level).

The protein localises to the cell membrane. It localises to the cytoplasmic vesicle membrane. The catalysed reaction is 2 iodide + L-tyrosine + 2 NADP(+) = 3,5-diiodo-L-tyrosine + 2 NADPH + H(+). The enzyme catalyses iodide + L-tyrosine + NADP(+) = 3-iodo-L-tyrosine + NADPH. It carries out the reaction 3-iodo-L-tyrosine + iodide + NADP(+) = 3,5-diiodo-L-tyrosine + NADPH + H(+). It catalyses the reaction L-tyrosine + chloride + NADP(+) = 3-chloro-L-tyrosine + NADPH. The catalysed reaction is bromide + L-tyrosine + NADP(+) = 3-bromo-L-tyrosine + NADPH. Catalyzes the dehalogenation of halotyrosines such as 3-bromo-L-tyrosine, 3-chloro-L-tyrosine, 3-iodo-L-tyrosine and 3,5-diiodo-L-tyrosine. During thyroid hormone biosynthesis, facilitates iodide salvage by catalysing the oxidative NADPH-dependent deiodination of the halogenated by-products of thyroid hormone production, monoiodotyrosine (L-MIT) and diiodotyrosine (L-DIT). The scavanged iodide can then reenter the hormone-producing pathways. Acts more efficiently on 3-iodo-L-tyrosine than 3,5-diiodo-L-tyrosine. The chain is Iodotyrosine deiodinase 1 (IYD) from Sus scrofa (Pig).